We begin with the raw amino-acid sequence, 141 residues long: Hemoglobin subunit alpha (141 aa).

One can recognise a Globin domain in the interval 1 to 141; that stretch reads VLSSTDKSNV…VSTVLTSKYR (141 aa). Ser-3 is subject to Phosphoserine. N6-succinyllysine occurs at positions 7 and 11. Position 16 is an N6-acetyllysine; alternate (Lys-16). An N6-succinyllysine; alternate modification is found at Lys-16. Tyr-24 is modified (phosphotyrosine). Ser-35 is modified (phosphoserine). An N6-succinyllysine modification is found at Lys-40. Position 58 (His-58) interacts with O2. His-87 serves as a coordination point for heme b. The residue at position 102 (Ser-102) is a Phosphoserine. Thr-108 is subject to Phosphothreonine. Phosphoserine occurs at positions 124 and 131. 2 positions are modified to phosphothreonine: Thr-134 and Thr-137. Ser-138 is subject to Phosphoserine.

This sequence belongs to the globin family. In terms of assembly, heterotetramer of two alpha chains and two beta chains. As to expression, red blood cells.

Functionally, involved in oxygen transport from the lung to the various peripheral tissues. Its function is as follows. Hemopressin acts as an antagonist peptide of the cannabinoid receptor CNR1. Hemopressin-binding efficiently blocks cannabinoid receptor CNR1 and subsequent signaling. This Pteropus poliocephalus (Grey-headed flying fox) protein is Hemoglobin subunit alpha (HBA).